The primary structure comprises 878 residues: MSEGSISLCFLGSLPNDVVNFVRAVVRILADIRGIVVEERSAEELSLSNPPTLTLAALDNTEPGSPAICSLYAFLTHLCTALETIGRHAEVSSLQHVLDLCRTTTDRGGLAIIRDESSGWTSGPTQLQSVQSLIEAWLEALNAAESATQLPAPLPAKTPNTWPMTLAEKILVQHAFSLPSPQGVSVGELMRVSVDWVIASELSWVGMKHSMISIGEQPTVWRNDRFWLAGDHTVDPRTYHQPRVQELIGGMEDAKKTFKMTENQGSNYTILHTEFVRERAEPGMLVIGSDSHTCSAGAVSSLAIGLGAADVMAALATGETWFKSPESIRVEFSGEPAWYIRGKDIILYILKKLKRNTHAADRIVEFGGPGAKHLSCDARFAICNMCTELGAITGIFVPDEVTHQFISNRRHSRYRSNSVYFQPDSDASYAATFQIDLSEVESFIALYPSPDNVVPVTETLDMPLDGCFIGACTTTEEDLVLAALVLEVGLQQGLELAIGKRMVVPGSLPIVSNLRVLGLLDVFEQAGFEQPAVSCSLCLGMGADRAGHGENWLSSQNRNFKNRMGHGSIGHICSAAVVAASSFSMRVTDPRPLLSQIPPERYQTLLDKCRDWRSAEPAARRHPGKIAIANQRTKPAPTMPAYVEPYRSFQPPVPPSSDQPQSMKDHGKTSNGENGILISKVYALGDFVDTDAIIPAAFILESPTDVLLGSHCLEFTNPDFRSQVRAGLEVVVAGKAFGCGSSREEAPRALKGLGVKCVIAKSFSFIYGRNQPTIGLLGIVITDERFYDAARTGVAIEINPSARTVTVAGQSFPFVMDDMELALIRRDGLATAYKALGKGVFRSLCADVPGKGGCGQTQGTIYMQVSMSLRVTPAVSRD.

Residues Q173 and 290–292 (DSH) each bind substrate. The [4Fe-4S] cluster site is built by C472, C535, and C538. Residues R558 and R563 each contribute to the substrate site. The interval 626–671 (IAIANQRTKPAPTMPAYVEPYRSFQPPVPPSSDQPQSMKDHGKTSN) is disordered. Substrate is bound at residue 742-743 (SR).

The protein belongs to the aconitase/IPM isomerase family.

It participates in antifungal biosynthesis. Functionally, aconitase; part of the gene cluster that mediates the de novo generation of L-homotyrosine from acetyl-CoA and 4-hydroxyphenyl-pyruvate. L-homotyrosine is a building block of echinocandin B, a fungal lipidated cyclic hexapeptide that acts as an antifungal agent. L-homotyrosine 4-hydroxyphenyl-pyruvate first undergoes an aldol-type condensation by htyA with the C-2 of acetyl-CoA followed by the release of CoA to form 2-(4-hydroxybenzyl)-malate. This is followed by isomerization of 2-(4-hydroxy-benzyl)-malate to 3-(4-hydroxybenzyl)-malate by htyD. Thereafter, 3-(4-hydroxybenzyl)-malate undergoes decarboxylation and oxidation to form 2-oxo-4-(4-hydroxybenzyl)butanoic acid, coupled to reduction of NAD(+) to NADH by htyC. The product then undergoes transamination catalyzed by htyB to form L-homotyrosine. This Aspergillus rugulosus (Emericella rugulosa) protein is Aconitase htyD.